The chain runs to 617 residues: Vacuolar protein sorting-associated protein 33A (617 aa).

The tract at residues 268–287 (NFPSDGALPGGGGSGPRVEE) is disordered.

Belongs to the STXBP/unc-18/SEC1 family. In terms of assembly, component of the class C core vacuole/endosome tethering (CORVET) complex composed of at least Vps8, dor/Vps18, car/Vps33A and Vps16A; unlike in other species, Vps11 is not part of the Drosophila complex. Due to the reduced number of components the Drosophila CORVET complex is often referred to as the miniCORVET complex. Interacts with ema. Component of the homotypic fusion and vacuole protein sorting (HOPS) complex, composed of Vps16A, car/Vps33A, dor/Vps18, Vps39, Vps11 and lt/Vps41. The tethering complex core made up of Vps16A, car/Vps33A and dor/Vps18 and shared by both HOPS and CORVET, preferentially associates with CORVET specific Vps8 over HOPS specific lt/Vps41. Interacts with Syx17 (via SNARE domain); the interaction requires Vps16A, may involve additional components of the HOPS complex and may promote assembly of the Syx17-Snap29-Vamp7 trans-SNARE complex.

The protein localises to the early endosome. It is found in the late endosome membrane. Its subcellular location is the lysosome membrane. In terms of biological role, core component of the class C core vacuole/endosome tethering (CORVET) and the homotypic fusion and vacuole protein sorting (HOPS) tethering complexes involved in endo-lysosomal vesicle trafficking and lysosome biogenesis. The CORVET complex facilitates docking and fusion of endosomal vesicles during endosome maturation, acts upstream of HOPS, but is not involved in autophagic flux. The CORVET complex may cooperate with the early endosomal tether Rbsn-5 to mediate endosomal fusion. The HOPS complex facilitates docking and fusion of lysosomes with late endosomes and several other types of vesicles. The HOPS complex is also involved in autophagy and crinophagy (the elimination of unused secretory granules through their fusion with lysosomes). The HOPS complex probably instigates autophagosome-lysosome fusion by binding autophagosome associated Syx17/syntaxin 17 and promoting assembly of the trans-SNARE complex. Independent of Syx17/syntaxin 17 HOPS is involved in biosynthetic transport to lysosomes and lysosome-related organelles such as eye-pigment granules. Required for endocytic degradation of boss/bride of sevenless and N/Notch in developing ommatidia. The polypeptide is Vacuolar protein sorting-associated protein 33A (Drosophila melanogaster (Fruit fly)).